The following is a 310-amino-acid chain: Homocysteine S-methyltransferase (310 aa).

The 310-residue stretch at 1–310 (MSQNNPLRAL…ADIAALKARS (310 aa)) folds into the Hcy-binding domain. Zn(2+) contacts are provided by cysteine 229, cysteine 295, and cysteine 296.

In terms of assembly, monomer. Requires Zn(2+) as cofactor.

It catalyses the reaction S-methyl-L-methionine + L-homocysteine = 2 L-methionine + H(+). Its function is as follows. Catalyzes methyl transfer from S-methylmethionine or S-adenosylmethionine (less efficient) to homocysteine, selenohomocysteine and less efficiently selenocysteine. The polypeptide is Homocysteine S-methyltransferase (mmuM) (Escherichia coli (strain K12)).